A 144-amino-acid chain; its full sequence is Eukaryotic translation initiation factor 1A, Y-chromosomal (144 aa).

Residues 1-15 are compositionally biased toward basic residues; it reads MPKNKGKGGKNRRRG. The disordered stretch occupies residues 1–26; sequence MPKNKGKGGKNRRRGKNENESEKREL. Positions 16 to 26 are enriched in basic and acidic residues; that stretch reads KNENESEKREL. The region spanning 22–96 is the S1-like domain; it reads EKRELVFKED…NKADVILKYN (75 aa). A Glycyl lysine isopeptide (Lys-Gly) (interchain with G-Cter in ubiquitin) cross-link involves residue lysine 88. The tract at residues 114 to 144 is disordered; the sequence is KINETDTFGPGDDDEVQFDDIGDDDEDIDDI. Residues 124 to 144 are compositionally biased toward acidic residues; sequence GDDDEVQFDDIGDDDEDIDDI.

It belongs to the eIF-1A family. In terms of assembly, component of the 43S pre-initiation complex (43S PIC), which is composed of the 40S ribosomal subunit, EIF1, eIF1A (EIF1AX), eIF3 complex, EIF5 and eIF2-GTP-initiator tRNA complex (eIF2 ternary complex). Interacts with EIF5; this interaction contributes to the maintenance of EIF1 within the open 43S PIC. Interacts through its C-terminal domain (CTD) with the CTD of EIF5B; from the location of the start codon by the 43S complex until the formation of the 80S complex. In terms of tissue distribution, ubiquitous.

The protein localises to the cytoplasm. Functionally, component of the 43S pre-initiation complex (43S PIC), which binds to the mRNA cap-proximal region, scans mRNA 5'-untranslated region, and locates the initiation codon. This protein enhances formation of the cap-proximal complex. Together with EIF1, facilitates scanning, start codon recognition, promotion of the assembly of 48S complex at the initiation codon (43S PIC becomes 48S PIC after the start codon is reached), and dissociation of aberrant complexes. After start codon location, together with EIF5B orients the initiator methionine-tRNA in a conformation that allows 60S ribosomal subunit joining to form the 80S initiation complex. Is released after 80S initiation complex formation, just after GTP hydrolysis by EIF5B, and before release of EIF5B. Its globular part is located in the A site of the 40S ribosomal subunit. Its interaction with EIF5 during scanning contribute to the maintenance of EIF1 within the open 43S PIC. In contrast to yeast orthologs, does not bind EIF1. This Pan troglodytes (Chimpanzee) protein is Eukaryotic translation initiation factor 1A, Y-chromosomal (EIF1AY).